The following is a 20-amino-acid chain: Conotoxin PnMLKM-D0211 (20 aa).

Residues 1–3 (VKR) constitute a propeptide that is removed on maturation. 3 disulfides stabilise this stretch: cysteine 4/cysteine 18, cysteine 5/cysteine 14, and cysteine 10/cysteine 17. A 4-hydroxyproline modification is found at proline 16. The residue at position 19 (tryptophan 19) is a Tryptophan amide.

The protein belongs to the conotoxin M superfamily. In terms of tissue distribution, expressed by the venom duct.

Its subcellular location is the secreted. This Conus pennaceus (Feathered cone) protein is Conotoxin PnMLKM-D0211.